The sequence spans 283 residues: MATKLQDENTPCLAATPSEPRPTVLVFDSGVGGLSVYDEIRRLLPDLHYIYAFDNVAFPYGEKSETFIVERVVEIVTAVQQRYPLSLAVIACNTASTVSLPALREKFAFPVVGVVPAIKPAARLTANGVVGLLATRATVKRPYTHELIARFANECQIAMLGSAELVELAEAKLHGDSVSLEELRRILRPWLRMPEPPDTVVLGCTHFPLLRDELLQVLPEGTRLVDSGAAIARRTAWLLEHEAPDAKSTDANIAYCMAMTPGAEQLLPVLQRYGFETLEKLPV.

Substrate is bound by residues aspartate 28–serine 29 and tyrosine 60–glycine 61. The active-site Proton donor/acceptor is cysteine 92. A substrate-binding site is contributed by asparagine 93–threonine 94. Cysteine 204 (proton donor/acceptor) is an active-site residue. A substrate-binding site is contributed by threonine 205–histidine 206.

This sequence belongs to the aspartate/glutamate racemases family.

It carries out the reaction L-glutamate = D-glutamate. It participates in cell wall biogenesis; peptidoglycan biosynthesis. In terms of biological role, provides the (R)-glutamate required for cell wall biosynthesis. In Salmonella enteritidis PT4 (strain P125109), this protein is Glutamate racemase.